A 299-amino-acid chain; its full sequence is Riboflavin transporter ImpX (299 aa).

EamA domains follow at residues 6 to 144 and 162 to 294; these read KGAL…YLLT and SLYS…SIIK. Transmembrane regions (helical) follow at residues 7 to 27, 34 to 54, 68 to 88, 101 to 121, 129 to 149, 158 to 178, 202 to 222, 224 to 244, 253 to 273, and 276 to 296; these read GALL…ALTP, VPFV…ILFG, DLFF…LCIV, VVTL…RLLL, YLFW…EFHL, LLPA…ATVF, IMFV…ATAG, WLIF…LYYF, VATM…YLIN, and VLSP…IKIS.

This sequence belongs to the EamA transporter family.

Its subcellular location is the cell membrane. Its function is as follows. Transports riboflavin into the cell. The protein is Riboflavin transporter ImpX of Fusobacterium nucleatum subsp. nucleatum (strain ATCC 23726 / VPI 4351).